A 167-amino-acid chain; its full sequence is C-X-C motif chemokine 15 (167 aa).

The first 25 residues, Met1 to Thr25, serve as a signal peptide directing secretion. 2 disulfides stabilise this stretch: Cys30–Cys57 and Cys32–Cys73. Ser157 bears the Phosphoserine mark.

The protein belongs to the intercrine alpha (chemokine CxC) family. As to expression, expression restricted to the lung, produced by bronchoepithelial cells and is released into the airways. Expressed at low levels in fetal lung.

Its subcellular location is the secreted. Functionally, chemotactic for neutrophils. Involved in lung-specific neutrophil trafficking during normal and inflammatory conditions. This is C-X-C motif chemokine 15 (Cxcl15) from Mus musculus (Mouse).